The following is a 132-amino-acid chain: Thioredoxin H4-2 (132 aa).

The Thioredoxin domain maps to 18 to 130 (DFKGGNVHVI…LEKKVQALAD (113 aa)). Residues Cys-56 and Cys-59 each act as nucleophile in the active site. Cysteines 56 and 59 form a disulfide.

The protein belongs to the thioredoxin family. Plant H-type subfamily.

The protein resides in the cytoplasm. Functionally, probable thiol-disulfide oxidoreductase that may be involved in the redox regulation of a number of cytosolic enzymes. This is Thioredoxin H4-2 from Oryza sativa subsp. japonica (Rice).